The chain runs to 202 residues: ATP-dependent Clp protease proteolytic subunit 1 (202 aa).

The active-site Nucleophile is the S102. H127 is an active-site residue.

The protein belongs to the peptidase S14 family. As to quaternary structure, fourteen ClpP subunits assemble into 2 heptameric rings which stack back to back to give a disk-like structure with a central cavity, resembling the structure of eukaryotic proteasomes.

Its subcellular location is the cytoplasm. It carries out the reaction Hydrolysis of proteins to small peptides in the presence of ATP and magnesium. alpha-casein is the usual test substrate. In the absence of ATP, only oligopeptides shorter than five residues are hydrolyzed (such as succinyl-Leu-Tyr-|-NHMec, and Leu-Tyr-Leu-|-Tyr-Trp, in which cleavage of the -Tyr-|-Leu- and -Tyr-|-Trp bonds also occurs).. Cleaves peptides in various proteins in a process that requires ATP hydrolysis. Has a chymotrypsin-like activity. Plays a major role in the degradation of misfolded proteins. This is ATP-dependent Clp protease proteolytic subunit 1 from Agrobacterium fabrum (strain C58 / ATCC 33970) (Agrobacterium tumefaciens (strain C58)).